We begin with the raw amino-acid sequence, 215 residues long: ER lumen protein-retaining receptor 3 (215 aa).

Topologically, residues Met1–Phe4 are lumenal. The helical transmembrane segment at Arg5 to Trp24 threads the bilayer. At Arg25–Ile32 the chain is on the cytoplasmic side. A helical transmembrane segment spans residues Ser33–Phe52. Residues Arg47–Tyr48 form an interaction with the K-D-E-L motif on target proteins region. At Thr53–Ala58 the chain is on the lumenal side. The helical transmembrane segment at Tyr59 to Phe79 threads the bilayer. The Cytoplasmic portion of the chain corresponds to Phe80–Ser92. The chain crosses the membrane as a helical span at residues Phe93 to Asn110. Residues Tyr111 to Leu116 are Lumenal-facing. The helical transmembrane segment at Glu117–Leu135 threads the bilayer. The Cytoplasmic segment spans residues Phe136–Ala149. Residues His150 to Trp168 form a helical membrane-spanning segment. An interaction with the K-D-E-L motif on target proteins region spans residues Arg159–Arg169. The Lumenal segment spans residues Arg169–Gln178. Residues Ile179 to Phe199 traverse the membrane as a helical segment. The Cytoplasmic segment spans residues Thr200–Val215. Residues Arg204–Lys208 are important for recycling of cargo proteins with the sequence motif K-D-E-L from the Golgi to the endoplasmic reticulum.

Belongs to the ERD2 family.

Its subcellular location is the endoplasmic reticulum membrane. The protein resides in the golgi apparatus membrane. The protein localises to the cytoplasmic vesicle. It is found in the COPI-coated vesicle membrane. Receptor for the C-terminal sequence motif K-D-E-L that is present on endoplasmic reticulum resident proteins and that mediates their recycling from the Golgi back to the endoplasmic reticulum. This chain is ER lumen protein-retaining receptor 3 (kdelr3), found in Danio rerio (Zebrafish).